The primary structure comprises 399 residues: Serine palmitoyltransferase (399 aa).

Residues 113-114, H213, T241, and S243 each bind pyridoxal 5'-phosphate; that span reads GF. The residue at position 244 (K244) is an N6-(pyridoxal phosphate)lysine.

The protein belongs to the class-II pyridoxal-phosphate-dependent aminotransferase family. As to quaternary structure, homodimer. Requires pyridoxal 5'-phosphate as cofactor.

Its subcellular location is the cytoplasm. The protein resides in the cell inner membrane. It catalyses the reaction L-serine + hexadecanoyl-CoA + H(+) = 3-oxosphinganine + CO2 + CoA. Its pathway is lipid metabolism; sphingolipid metabolism. Its function is as follows. Catalyzes the condensation of L-serine with palmitoyl-CoA (hexadecanoyl-CoA) to produce 3-oxosphinganine. Exhibits a broad substrate specificity concerning the chain length and the degree of unsaturation of acyl-CoA. The polypeptide is Serine palmitoyltransferase (Sphingobacterium multivorum).